Reading from the N-terminus, the 704-residue chain is MAEAAEPEGVAPGPQGPPEVPAPLAERPGEPGAAGGEAEGPEGSEGAEEAPRGAAAVKEAGGGGPDRGPEAEARGTRGAHGETEAEEGAPEGAEVPQGGEETSGAQQVEGASPGRGAQGEPRGEAQREPEDSAAPERQEEAEQRPEVPEGSASGEAGDSVDAEGPLGDNIEAEGPAGDSVEAEGRVGDSVDAEGPAGDSVDAEGPLGDNIQAEGPAGDSVDAEGRVGDSVDAEGPAGDSVDAEGRVGDSVEAGDPAGDGVEAGVPAGDSVEAEGPAGDSMDAEGPAGRARRVSGEPQQSGDGSLSPQAEAIEVAAGESAGRSPGELAWDAAEEAEVPGVKGSEEAAPGDARADAGEDRVGDGPQQEPGEDEERRERSPEGPREEEAAGGEEESPDSSPHGEASRGAAEPEAQLSNHLAEEGPAEGSGEAARVNGRREDGEASEPRALGQEHDITLFVKVKLTALGCSRIAIKKYLRAGYDGESIGNCPFSQRLFMILWLKGVIFNVTTVDLKRKPADLQNLAPGTNPPFMTFDGEVKTDVNKIEEFLEEKLAPPRYPKLGTQHPESNSAGNDVFAKFSAFIKNTKKDANEIHEKNLLKALRKLDNYLNSPLPDEIDAYSTEDVTVSGRKFLDGDELTLADCNLLPKLHIIKIVAKKYRDFEFPSEMTGIWRYLNNAYARDEFTNTCPADQEIEHAYSDVAKRMK.

Residues 1–13 show a composition bias toward low complexity; it reads MAEAAEPEGVAPG. The interval 1–446 is disordered; sequence MAEAAEPEGV…EDGEASEPRA (446 aa). The span at 39 to 48 shows a compositional bias: acidic residues; sequence EGPEGSEGAE. A Phosphoserine modification is found at serine 44. A compositionally biased stretch (basic and acidic residues) spans 67–83; sequence RGPEAEARGTRGAHGET. Residues 90-100 are compositionally biased toward low complexity; sequence PEGAEVPQGGE. Basic and acidic residues predominate over residues 121–147; sequence PRGEAQREPEDSAAPERQEEAEQRPEV. 13 repeat units span residues 157–166, 167–176, 177–186, 187–196, 197–206, 207–216, 217–226, 227–236, 237–246, 247–256, 257–266, 267–276, and 277–286. The segment at 157-282 is 13 X 10 AA tandem repeat of G-D-[SNG]-[VIM]-[DEQ]-A-[EAG]-[GDVE]-[PRG]-[LAVP]; that stretch reads GDSVDAEGPL…EGPAGDSMDA (126 aa). Residues 295–306 are compositionally biased toward polar residues; that stretch reads EPQQSGDGSLSP. 2 stretches are compositionally biased toward basic and acidic residues: residues 350 to 360 and 371 to 385; these read ARADAGEDRVG and EERR…REEE. A phosphoserine mark is found at serine 397 and serine 442. A compositionally biased stretch (basic and acidic residues) spans 434-446; sequence GRREDGEASEPRA. A G-site motif is present at residues 487 to 490; the sequence is CPFS. The helical transmembrane segment at 489–509 threads the bilayer; the sequence is FSQRLFMILWLKGVIFNVTTV. The GST C-terminal domain occupies 556–704; the sequence is YPKLGTQHPE…AYSDVAKRMK (149 aa).

This sequence belongs to the chloride channel CLIC family. Monomer (soluble state). Interacts with dopamine receptors DRD2, DRD3 and DRD4. Post-translationally, phosphorylated. Expressed in brain, placenta, pancreas, liver, lung, heart, kidney, liver, spleen, soleus muscle, and brown fat.

The protein resides in the cytoplasm. The protein localises to the cell membrane. The enzyme catalyses chloride(in) = chloride(out). With respect to regulation, channel activity is redox- and pH-regulated. Inhibited by IAA-94. In the soluble state, catalyzes glutaredoxin-like thiol disulfide exchange reactions with reduced glutathione as electron donor. Can insert into membranes and form voltage-dependent chloride-selective channels. The channel opens upon membrane depolarization at positive voltages and closes at negative membrane voltages. May play a critical role in water-secreting cells, possibly through the regulation of chloride ion transport. The polypeptide is Chloride intracellular channel protein 6 (Homo sapiens (Human)).